A 350-amino-acid chain; its full sequence is Glycerol-1-phosphate dehydrogenase [NAD(P)+] (350 aa).

NAD(+) is bound by residues G97 to D101 and T119 to S122. D124 contributes to the substrate binding site. Position 128 (S128) interacts with NAD(+). D171 contacts substrate. Zn(2+)-binding residues include D171 and H251. H255 contributes to the substrate binding site. H267 is a binding site for Zn(2+).

This sequence belongs to the glycerol-1-phosphate dehydrogenase family. Zn(2+) is required as a cofactor.

The protein resides in the cytoplasm. It carries out the reaction sn-glycerol 1-phosphate + NAD(+) = dihydroxyacetone phosphate + NADH + H(+). It catalyses the reaction sn-glycerol 1-phosphate + NADP(+) = dihydroxyacetone phosphate + NADPH + H(+). Its pathway is membrane lipid metabolism; glycerophospholipid metabolism. Its function is as follows. Catalyzes the NAD(P)H-dependent reduction of dihydroxyacetonephosphate (DHAP or glycerone phosphate) to glycerol 1-phosphate (G1P). The G1P thus generated is used as the glycerophosphate backbone of phospholipids in the cellular membranes of Archaea. The chain is Glycerol-1-phosphate dehydrogenase [NAD(P)+] from Thermococcus sibiricus (strain DSM 12597 / MM 739).